We begin with the raw amino-acid sequence, 453 residues long: Signal recognition particle protein (453 aa).

GTP-binding positions include 107–114 (GLQGAGKT), 190–194 (DTAGR), and 248–251 (TKVD).

It belongs to the GTP-binding SRP family. SRP54 subfamily. In terms of assembly, part of the signal recognition particle protein translocation system, which is composed of SRP and FtsY. SRP is a ribonucleoprotein composed of Ffh and a 4.5S RNA molecule.

It localises to the cytoplasm. The enzyme catalyses GTP + H2O = GDP + phosphate + H(+). Its function is as follows. Involved in targeting and insertion of nascent membrane proteins into the cytoplasmic membrane. Binds to the hydrophobic signal sequence of the ribosome-nascent chain (RNC) as it emerges from the ribosomes. The SRP-RNC complex is then targeted to the cytoplasmic membrane where it interacts with the SRP receptor FtsY. Interaction with FtsY leads to the transfer of the RNC complex to the Sec translocase for insertion into the membrane, the hydrolysis of GTP by both Ffh and FtsY, and the dissociation of the SRP-FtsY complex into the individual components. This is Signal recognition particle protein from Escherichia coli O157:H7.